The sequence spans 930 residues: uncharacterized protein (930 aa).

Positions 1 to 20 (MPSFVLWTFHLCSQWFQGLT) are cleaved as a signal peptide. Asparagine 137, asparagine 146, asparagine 164, asparagine 210, asparagine 257, asparagine 628, asparagine 717, and asparagine 799 each carry an N-linked (GlcNAc...) asparagine glycan.

The protein localises to the secreted. This is an uncharacterized protein from Arthroderma benhamiae (strain ATCC MYA-4681 / CBS 112371) (Trichophyton mentagrophytes).